A 288-amino-acid chain; its full sequence is Rhox homeobox family member 2B (288 aa).

The tract at residues Ser16–Pro136 is disordered. Residues Val39 to Pro48 are compositionally biased toward acidic residues. Basic and acidic residues predominate over residues Gly68 to Gly80. The homeobox DNA-binding region spans Gln134–Gln193. The short motif at Arg186 to Ala195 is the Nuclear localization signal element.

It belongs to the paired-like homeobox family. PEPP subfamily. Expressed in testis, mainly expressed in germ cells, but also detected in somatic cells such as Sertoli cells, Leydig cells and peritubular cells.

Its subcellular location is the nucleus. In terms of biological role, transcription factor maybe involved in reproductive processes. Modulates expression of target genes encoding proteins involved in processes relevant to spermatogenesis. In Homo sapiens (Human), this protein is Rhox homeobox family member 2B.